The following is a 289-amino-acid chain: Glyoxylate/succinic semialdehyde reductase 1 (289 aa).

An N-acetylmethionine modification is found at methionine 1. NADP(+) is bound by residues 4 to 18 (GFLGLGIMGKAMSMN) and threonine 95. Lysine 170 is an active-site residue. An NADP(+)-binding site is contributed by lysine 238.

Belongs to the HIBADH-related family. NP60 subfamily.

Its subcellular location is the cytoplasm. The protein localises to the cytosol. The catalysed reaction is glycolate + NADP(+) = glyoxylate + NADPH + H(+). It catalyses the reaction 4-hydroxybutanoate + NADP(+) = succinate semialdehyde + NADPH + H(+). Its activity is regulated as follows. The ratio of NADPH/NADP(+) may regulate enzymatic activity. In terms of biological role, catalyzes the NADPH-dependent reduction of glyoxylate to glycolate as well as succinic semialdehyde (SSA) to gamma-hydroxybutyrate in vitro. May function in redox homeostasis and play a role in oxidative stress tolerance by detoxifying glyoxylate and SSA generated in glycolate metabolism and GABA metabolism, respectively. This chain is Glyoxylate/succinic semialdehyde reductase 1 (GLYR1), found in Arabidopsis thaliana (Mouse-ear cress).